Reading from the N-terminus, the 362-residue chain is Phosphoserine aminotransferase (362 aa).

L-glutamate-binding residues include Ser9 and Arg42. Residues 76 to 77 (GR), Trp102, Thr153, Asp174, and Gln197 contribute to the pyridoxal 5'-phosphate site. The residue at position 198 (Lys198) is an N6-(pyridoxal phosphate)lysine. Position 239-240 (239-240 (NT)) interacts with pyridoxal 5'-phosphate.

This sequence belongs to the class-V pyridoxal-phosphate-dependent aminotransferase family. SerC subfamily. Homodimer. Pyridoxal 5'-phosphate is required as a cofactor.

Its subcellular location is the cytoplasm. The enzyme catalyses O-phospho-L-serine + 2-oxoglutarate = 3-phosphooxypyruvate + L-glutamate. The catalysed reaction is 4-(phosphooxy)-L-threonine + 2-oxoglutarate = (R)-3-hydroxy-2-oxo-4-phosphooxybutanoate + L-glutamate. It participates in amino-acid biosynthesis; L-serine biosynthesis; L-serine from 3-phospho-D-glycerate: step 2/3. It functions in the pathway cofactor biosynthesis; pyridoxine 5'-phosphate biosynthesis; pyridoxine 5'-phosphate from D-erythrose 4-phosphate: step 3/5. In terms of biological role, catalyzes the reversible conversion of 3-phosphohydroxypyruvate to phosphoserine and of 3-hydroxy-2-oxo-4-phosphonooxybutanoate to phosphohydroxythreonine. This Salmonella agona (strain SL483) protein is Phosphoserine aminotransferase.